Reading from the N-terminus, the 436-residue chain is UPF0597 protein YhaM (436 aa).

Belongs to the UPF0597 family.

This chain is UPF0597 protein YhaM, found in Escherichia coli (strain 55989 / EAEC).